Here is a 250-residue protein sequence, read N- to C-terminus: uncharacterized protein (250 aa).

Lysine 17 is covalently cross-linked (Glycyl lysine isopeptide (Lys-Gly) (interchain with G-Cter in ubiquitin)). Residues 30-67 form a disordered region; the sequence is REEDYVATSKDNIHHHPCDWSAKPSQRQNENEQKSTIR.

This is an uncharacterized protein from Saccharomyces cerevisiae (strain ATCC 204508 / S288c) (Baker's yeast).